Reading from the N-terminus, the 313-residue chain is MTQLPILLLLISLVYATPSPQTSKKIGDDATISCSRNNTNYYVVMSAWYKEPNSIILLAAKSDVLYFDNYTKDKISYDSPYDDLVTTITIKSLTAGDAGTYICAFFMTSTTNDTDKVDYEEYSIELIVNTDSESTIDIILSGSTPETISEKPEDIDNSNCSSVFEITTPEPITDNVDDHTDTVTYTSDSINTVNASSGESTTDEIPEPITDKEEDHTVTDTVSYTTVSTSSGIVTTKSTTDDADLYDTYNDNDTVPPTTVGGSTTSISNYKTKDFVEIFGITTLIILSAVAIFCITYYICNKHPRKYKTENKV.

Positions 1 to 16 are cleaved as a signal peptide; the sequence is MTQLPILLLLISLVYA. Residues 17–274 are Virion surface-facing; sequence TPSPQTSKKI…TSISNYKTKD (258 aa). N-linked (GlcNAc...) asparagine; by host glycans are attached at residues N37, N69, N112, N159, N194, and N252. A helical membrane pass occupies residues 275-295; that stretch reads FVEIFGITTLIILSAVAIFCI. Residues 296–313 lie on the Intravirion side of the membrane; the sequence is TYYICNKHPRKYKTENKV.

This sequence belongs to the orthopoxvirus OPG185 family. In terms of assembly, heterodimerizes with OPG040. The heterodimer OPG185-OPG040 interacts with components of the entry fusion complex OPG143 and OPG094. Heterodimer with C3/VPC protein; disulfide-linked. In terms of processing, glycosylated; contains phosphate and sulfate-substituted glycans. O-glycosylation is required for hemagglutination and hemadsorption activities of infected cell membranes.

The protein resides in the virion membrane. It is found in the host membrane. Functionally, prevents cell to cell fusion by interacting with and directing the viral OPG040 protein on the host plasma membrane. The OPG185-OPG040 complex associates with components of the entry fusion complex (EFC) presumably to avoid superinfection and syncytium formation. Via its interaction with C3/VCP protein, protects the infected cell and probably also the extracellular enveloped virus from complement attack. The chain is Protein OPG185 (OPG185) from Monkeypox virus.